Reading from the N-terminus, the 598-residue chain is Arginine--tRNA ligase (598 aa).

Residues 131-141 (ANPTGPMHVGH) carry the 'HIGH' region motif. Positions 288-309 (KLPPPKSKKGQPPPQPQPDEEG) are disordered.

This sequence belongs to the class-I aminoacyl-tRNA synthetase family. Monomer.

Its subcellular location is the cytoplasm. The catalysed reaction is tRNA(Arg) + L-arginine + ATP = L-arginyl-tRNA(Arg) + AMP + diphosphate. The chain is Arginine--tRNA ligase from Anaeromyxobacter dehalogenans (strain 2CP-1 / ATCC BAA-258).